The sequence spans 436 residues: MKVKTITRGTSLTRLNDQDPVKRNLDPSLHPFERAREYTRALNATKMDRMFAAPFLGQLGRGHQDGVYSLARDTKTLIDCASGSGDGAVKLWDASERCERWTSKAHEGIVRGLVFSNQGDVLSCASDRYVYMLNKQDGKVKRSYLGDSSLLDIDTSKGGDLFATSGENVSIWDYSRDTPVTKFEWGADTLPVVKFNYTETSVLASAGMDRSIVIYDLRTSSPLTKLITKLRTNSISWNPMEAFNFVAGSEDHNLYMYDMRNLKRALHVYKDHVSAVMSVDFSPTGQEFVSGSYDKTIRIYNVREGHSRDVYHTKRMQRVTAVKFSMDAQYIFSGSDDSNVRLWRARASSRASIRSTREENRLKYLDSLRERYKHIPEIRRIARHRHLPTNVKKAAEIKREEINSLKRREENIRRHSKKGAVPYEKERERHVVGIQK.

WD repeat units lie at residues 62 to 102 (GHQD…ERWT), 105 to 143 (AHEG…VKRS), 145 to 175 (LGDS…WDYS), 176 to 225 (RDTP…PLTK), 227 to 267 (ITKL…RALH), 271 to 310 (DHVS…SRDV), and 314 to 353 (KRMQ…RASI). Residues 411-436 (NIRRHSKKGAVPYEKERERHVVGIQK) form a disordered region. Basic and acidic residues predominate over residues 423–436 (YEKERERHVVGIQK).

The protein belongs to the WD repeat DCAF13/WDSOF1 family. In terms of assembly, interacts with snoRNA U3. Component of the ribosomal small subunit (SSU) processome composed of at least 40 protein subunits and snoRNA U3.

Its subcellular location is the nucleus. It localises to the nucleolus. The protein localises to the cytoplasm. The protein resides in the cytoskeleton. It is found in the spindle. Its function is as follows. Required for ribosomal RNA processing. The polypeptide is Protein sof1 (sof1) (Schizosaccharomyces pombe (strain 972 / ATCC 24843) (Fission yeast)).